The chain runs to 210 residues: Amelogenin, X isoform (210 aa).

The signal sequence occupies residues 1–16; the sequence is MGTWILFACLLGAAFA. Ser-32 bears the Phosphoserine mark. Low complexity-rich tracts occupy residues 109–119 and 136–169; these read VAPQQPMMPVP and PSAQQPFQQPFQPQAIPPQSHQPMQPQSPLHPMQ. The segment at 109–187 is disordered; the sequence is VAPQQPMMPV…PPLFSMQPLS (79 aa). Residues 170-179 are compositionally biased toward pro residues; sequence PLAPQPPLPP.

This sequence belongs to the amelogenin family. As to quaternary structure, interacts with KRT5. Several forms are produced by C-terminal processing. In terms of processing, phosphorylated by FAM20C in vitro.

Its subcellular location is the secreted. The protein localises to the extracellular space. The protein resides in the extracellular matrix. In terms of biological role, plays a role in the biomineralization of teeth. Seems to regulate the formation of crystallites during the secretory stage of tooth enamel development. Thought to play a major role in the structural organization and mineralization of developing enamel. This is Amelogenin, X isoform (Amelx) from Mus musculus (Mouse).